The primary structure comprises 206 residues: Small ribosomal subunit protein uS4 (206 aa).

The S4 RNA-binding domain maps to 96–156; sequence SRLDNVVYRM…EKSKKQVRIA (61 aa).

The protein belongs to the universal ribosomal protein uS4 family. As to quaternary structure, part of the 30S ribosomal subunit. Contacts protein S5. The interaction surface between S4 and S5 is involved in control of translational fidelity.

One of the primary rRNA binding proteins, it binds directly to 16S rRNA where it nucleates assembly of the body of the 30S subunit. Its function is as follows. With S5 and S12 plays an important role in translational accuracy. This chain is Small ribosomal subunit protein uS4, found in Laribacter hongkongensis (strain HLHK9).